A 661-amino-acid polypeptide reads, in one-letter code: UvrABC system protein B (661 aa).

Positions 26–413 constitute a Helicase ATP-binding domain; the sequence is KGINEGRKHQ…TPEMVEQIIR (388 aa). 39–46 is a binding site for ATP; sequence GATGTGKT. A Beta-hairpin motif is present at residues 92–115; it reads YYDYYQPEAYVPQTDTFIEKDASI. A Helicase C-terminal domain is found at 430-596; sequence QIDDLIGEIQ…TINKKIRDVI (167 aa). The region spanning 625–660 is the UVR domain; it reads EKVIAQMESDMKEAAKALDFERAAELRDLLLELKSE.

The protein belongs to the UvrB family. As to quaternary structure, forms a heterotetramer with UvrA during the search for lesions. Interacts with UvrC in an incision complex.

The protein resides in the cytoplasm. In terms of biological role, the UvrABC repair system catalyzes the recognition and processing of DNA lesions. A damage recognition complex composed of 2 UvrA and 2 UvrB subunits scans DNA for abnormalities. Upon binding of the UvrA(2)B(2) complex to a putative damaged site, the DNA wraps around one UvrB monomer. DNA wrap is dependent on ATP binding by UvrB and probably causes local melting of the DNA helix, facilitating insertion of UvrB beta-hairpin between the DNA strands. Then UvrB probes one DNA strand for the presence of a lesion. If a lesion is found the UvrA subunits dissociate and the UvrB-DNA preincision complex is formed. This complex is subsequently bound by UvrC and the second UvrB is released. If no lesion is found, the DNA wraps around the other UvrB subunit that will check the other stand for damage. This is UvrABC system protein B from Bacillus licheniformis (strain ATCC 14580 / DSM 13 / JCM 2505 / CCUG 7422 / NBRC 12200 / NCIMB 9375 / NCTC 10341 / NRRL NRS-1264 / Gibson 46).